Here is a 1189-residue protein sequence, read N- to C-terminus: Increased DNA methylation 1 (1189 aa).

Disordered regions lie at residues 475-498 (KNLH…HDSL) and 523-597 (SRDE…CRLL). Residues 523-532 (SRDERLRNEK) show a composition bias toward basic and acidic residues. 2 stretches are compositionally biased toward basic residues: residues 541–550 (KKGRKKARKH) and 565–590 (NKGK…KRNN). The segment at 726-771 (DDSCGVCGDGGELICCDNCPSTFHQACLSMQVLPEGSWYCSSCTCW) adopts a PHD-type 1 zinc-finger fold. A PHD-type 2; degenerate zinc finger spans residues 767–823 (SCTCWICSELVSDNAERSQDFKCSQCAHKYHGTCLQGISKRRKLFPETYFCGKNCEK). An N-acetyltransferase domain is found at 879–1024 (MEESFLSMVD…GTTLLKKTLY (146 aa)). A disordered region spans residues 1031–1157 (TMKGVCLSKE…SSSSAALEEV (127 aa)). Basic and acidic residues-rich tracts occupy residues 1038-1050 (SKER…KEAD), 1102-1114 (NPSR…DRPN), and 1129-1145 (CLQK…KETT). The segment covering 1147–1157 (ASSSSAALEEV) has biased composition (low complexity).

Interacts (via N-terminus) with IDM2. Interacts with IMD3. Part of a complex made of MBD7, IDM1, IDM2 and IDM3. In terms of tissue distribution, expressed in cotyledons and hypocotyls in young seedlings.

Its subcellular location is the nucleus. Its function is as follows. Histone H3 acetyltransferase that binds methylated DNA at chromatin sites lacking histone H3K4 di- or trimethylation and catalyzes H3K18 and H3K23 acetylation. Prevents the transcriptional silencing of transgenes and of some endogenous genes. Requires the presence of IDM2 for efficient H3K18 acetylation, but not for H3K23 acetylation. This Arabidopsis thaliana (Mouse-ear cress) protein is Increased DNA methylation 1.